The following is a 390-amino-acid chain: Protein NDRG4-A (390 aa).

A disordered region spans residues 356–390; that stretch reads LTSASSVDGSRPRPCTQSESSDGIGQINHTMEVSC. Residues 370-390 are compositionally biased toward polar residues; that stretch reads CTQSESSDGIGQINHTMEVSC.

The protein belongs to the NDRG family.

Its subcellular location is the cytoplasm. It is found in the cytosol. In terms of biological role, contributes to the maintenance of intracerebral BDNF levels within the normal range. May enhance growth factor-induced ERK1 and ERK2 phosphorylation. May attenuate growth factor-promoted ELK1 phosphorylation in a microtubule-dependent manner. The protein is Protein NDRG4-A (ndrg4-a) of Xenopus laevis (African clawed frog).